We begin with the raw amino-acid sequence, 590 residues long: Interferon alpha/beta receptor 1 (590 aa).

The signal sequence occupies residues 1 to 26 (MLAVVGAAALVLVAGAPWVLPSAAGG). Topologically, residues 27–429 (ENLKPPENID…EKTRPGSFST (403 aa)) are extracellular. Fibronectin type-III domains follow at residues 31–125 (PPEN…PFYT), 127–226 (HMSP…TTVA), 230–327 (PVPG…FIDS), and 332–425 (LPPP…TRPG). N-linked (GlcNAc...) asparagine glycosylation is present at Asn-43. Residues Cys-78 and Cys-86 are joined by a disulfide bond. N-linked (GlcNAc...) asparagine glycosylation is found at Asn-109, Asn-181, and Asn-214. Intrachain disulfides connect Cys-199–Cys-220 and Cys-284–Cys-292. Asn-314, Asn-370, Asn-409, and Asn-413 each carry an N-linked (GlcNAc...) asparagine glycan. The cysteines at positions 397 and 419 are disulfide-linked. A helical transmembrane segment spans residues 430–449 (IWIITGLGVVFFSVMVLYAL). Topologically, residues 450-590 (RSVWKYLCHV…ALRTEPALLC (141 aa)) are cytoplasmic. The segment at 483–492 (VLLTAEEHTE) is important for interaction with TYK2. Positions 514 to 545 (DLRKYSSQTSQDSGNYSNEEEESVGTESGQAV) are disordered. Lys-517 participates in a covalent cross-link: Glycyl lysine isopeptide (Lys-Gly) (interchain with G-Cter in ubiquitin). Positions 518 to 530 (YSSQTSQDSGNYS) are enriched in polar residues. Ser-526 is modified (phosphoserine).

The protein belongs to the type II cytokine receptor family. Heterodimer with IFNAR2; forming the receptor for type I interferon. Interacts with TYK2. Interacts with STAT1 and STAT2. Interacts (serine-phosphorylated form) with FBXW11, the substrate recognition component of a SCF (SKP1-CUL1-F-box protein) E3 ubiquitin-protein ligase complex. 3Interacts with SHMT2; this promotes interaction with ABRAXAS2 and the BRISC complex. Interacts with TRIM10; this interaction prevents association between IFNAR1 and TYK2. Ubiquitinated. This leads to its internalization and lysosomal degradation. The 'Lys-63'-linked ubiquitin chains are cleaved off by the BRISC complex; this prevents receptor internalization and degradation. Probable ubiquitination sites have been identified in human, but are poorly conserved across species. Post-translationally, phosphorylated on serine residues in response to interferon binding; this promotes interaction with FBXW11 and ubiquitination.

It localises to the cell membrane. It is found in the late endosome. Its subcellular location is the lysosome. Functionally, together with IFNAR2, forms the heterodimeric receptor for type I interferons (including interferons alpha, beta, epsilon, omega and kappa). Type I interferon binding activates the JAK-STAT signaling cascade, and triggers tyrosine phosphorylation of a number of proteins including JAKs, TYK2, STAT proteins and the IFNR alpha- and beta-subunits themselves. STAT proteins are then phosphorylated by the JAKs, promoting their translocation into the nucleus to regulate expression of interferon-regulated genes. Can also act independently of IFNAR2: form an active IFNB1 receptor by itself and activate a signaling cascade that does not involve activation of the JAK-STAT pathway. This Mus musculus (Mouse) protein is Interferon alpha/beta receptor 1 (Ifnar1).